The chain runs to 389 residues: Gustatory receptor for bitter taste 22e (389 aa).

Over 1-14 (MFRPSGSGYRQKWT) the chain is Cytoplasmic. Residues 15–35 (GLTLKGALYGSWILGVFPFAY) form a helical membrane-spanning segment. The Extracellular segment spans residues 36–46 (DSWTRTLRRSK). Residues 47 to 67 (WLIAYGFVLNAAFILLVVTND) form a helical membrane-spanning segment. The Cytoplasmic portion of the chain corresponds to 68 to 142 (TESETPLRME…SLEECISFDR (75 aa)). A helical membrane pass occupies residues 143 to 163 (FVLYKGFSVVLELVSMLVLEL). At 164-170 (GMSPNYS) the chain is on the extracellular side. N-linked (GlcNAc...) asparagine glycosylation is present at Asn168. Residues 171–191 (AQFFIGLGSLCLMLLAVLLGA) traverse the membrane as a helical segment. Topologically, residues 192-254 (SHFHLAVVFV…QRLASIYDYQ (63 aa)) are cytoplasmic. Residues 255-275 (MVMVMVSFLIANVLGIYFFII) form a helical membrane-spanning segment. Residues 276–287 (YSISLNKSLDFK) are Extracellular-facing. N-linked (GlcNAc...) asparagine glycosylation is present at Asn281. The helical transmembrane segment at 288–308 (ILVFVQALVINMLDFWLNVEI) threads the bilayer. Over 309-366 (CELAERTGRQTSTILKLFNDIENIDEKLERSITDFALFCSHRRLRFHHCGLFYVNYEM) the chain is Cytoplasmic. Residues 367–387 (GFRMAITSFLYLLFLIQFDYW) form a helical membrane-spanning segment. At 388-389 (NL) the chain is on the extracellular side.

Belongs to the insect chemoreceptor superfamily. Gustatory receptor (GR) family. Gr22e subfamily. In terms of tissue distribution, taste bristles on the labial palp, labral and cibarial sense organs, chemosensory bristles on the leg and anterior wing margin. In larvae, is expressed in neurons of the terminal external chemosensory organ and in the dorsal pharyngeal sense organ. Neurons expressing Gr22e also express Gr66a and correspond to taste neurons that mediate sensitivity to bitter compounds.

Its subcellular location is the cell membrane. In terms of biological role, gustatory receptor which mediates acceptance or avoidance behavior, depending on its substrates. Seems to be involved in the sensing of bitter taste since it is expressed in neurons that mediate sensitivity to bitter compounds which are also avoidance-type taste neurons. The chain is Gustatory receptor for bitter taste 22e (Gr22e) from Drosophila melanogaster (Fruit fly).